A 170-amino-acid polypeptide reads, in one-letter code: uncharacterized protein (170 aa).

The next 3 helical transmembrane spans lie at isoleucine 31–phenylalanine 51, leucine 58–phenylalanine 78, and isoleucine 133–phenylalanine 153.

The protein to M.jannaschii MJ0554 and MJ0587.

The protein localises to the cell membrane. This is an uncharacterized protein from Methanocaldococcus jannaschii (strain ATCC 43067 / DSM 2661 / JAL-1 / JCM 10045 / NBRC 100440) (Methanococcus jannaschii).